Consider the following 220-residue polypeptide: Guanylate kinase (220 aa).

One can recognise a Guanylate kinase-like domain in the interval 16–195 (GLMFVLSSPS…AFESVRSILR (180 aa)). 23–30 (SPSGAGKT) serves as a coordination point for ATP.

This sequence belongs to the guanylate kinase family.

The protein resides in the cytoplasm. It carries out the reaction GMP + ATP = GDP + ADP. Functionally, essential for recycling GMP and indirectly, cGMP. This Rhodopseudomonas palustris (strain ATCC BAA-98 / CGA009) protein is Guanylate kinase.